Reading from the N-terminus, the 344-residue chain is N,N-dimethyltransferase OxyT (344 aa).

S-adenosyl-L-methionine contacts are provided by residues Asp205 and 231-233; that span reads GDF.

It belongs to the class I-like SAM-binding methyltransferase superfamily. Cation-independent O-methyltransferase family.

It carries out the reaction 4-amino-4-dedimethylamino-anhydrotetracycline + S-adenosyl-L-methionine = 4-methylamino-4-dedimethylamino-anhydrotetracycline + S-adenosyl-L-homocysteine + H(+). The catalysed reaction is 4-methylamino-4-dedimethylamino-anhydrotetracycline + S-adenosyl-L-methionine = anhydrotetracycline + S-adenosyl-L-homocysteine + H(+). It participates in antibiotic biosynthesis; oxytetracycline biosynthesis. Involved in the biosynthesis of the tetracycline antibiotic, oxytetracycline. Catalyzes the dimethylation of 4-amino-4-de(dimethylamino)anhydrotetracycline (4-amino-ATC) to yield anhydrotetracycline (ATC). Also able to catalyze the dimethylation of 7-chloro-, 6-demethyl-, 2-decarboxamido-2-nitrile-, and 4-methylamino-derivatives of 4-amino-4-de(dimethylamino)anhydrotetracycline. The protein is N,N-dimethyltransferase OxyT of Streptomyces rimosus.